The following is a 224-amino-acid chain: UPF0758 protein Psyr_0222 (224 aa).

Residues 102-224 form the MPN domain; sequence ALENPTQVRS…PLSMVERGLM (123 aa). Residues His173, His175, and Asp186 each coordinate Zn(2+). The short motif at 173 to 186 is the JAMM motif element; the sequence is HNHPSGITTPSRSD.

This sequence belongs to the UPF0758 family.

The protein is UPF0758 protein Psyr_0222 of Pseudomonas syringae pv. syringae (strain B728a).